A 217-amino-acid chain; its full sequence is Grancalcin (217 aa).

EF-hand domains lie at 48–83 (SSAG…SGIN), 89–122 (FSLE…AALN), 119–154 (AALN…MGYR), and 155–180 (LSPQ…DYVA). Ca(2+) is bound by residues D65, D69, and E71. 5 residues coordinate Ca(2+): D132, D134, S136, T138, and E143.

In terms of assembly, homodimer. Interacts with SRI and LCP1. Detected in neutrophils and macrophages (at protein level). Highly expressed in bone marrow.

The protein resides in the cytoplasm. The protein localises to the cytoplasmic granule membrane. In terms of biological role, calcium-binding protein that may play a role in the adhesion of neutrophils to fibronectin. May play a role in the formation of focal adhesions. In Homo sapiens (Human), this protein is Grancalcin (GCA).